The following is an 89-amino-acid chain: Phytosulfokines 1 (89 aa).

A signal peptide spans 1–22; that stretch reads MVNPGRTARALCLLCLALLLLG. Positions 23–79 are excised as a propeptide; the sequence is QDTHSRKLLLQEKHSHGVGNGTTTTQEPSRENGGSTGSNNNGQLQFDSAKWEEFHTD. Residues 33-70 form a disordered region; the sequence is QEKHSHGVGNGTTTTQEPSRENGGSTGSNNNGQLQFDS. Asparagine 42 is a glycosylation site (N-linked (GlcNAc...) asparagine). Sulfotyrosine is present on residues tyrosine 80 and tyrosine 82. The propeptide occupies 85–89; it reads DVKKP.

It belongs to the phytosulfokine family. Sulfation is important for activity and for the binding to a putative membrane receptor. In terms of processing, PSK-alpha is produced by endopeptidase digestion. PSK-beta is produced from PSK-alpha by exopeptidase digestion. In terms of tissue distribution, expressed throughout the seedling. More abundant in fragments containing shoot or root apexes where cells proliferate vigorously.

The protein resides in the secreted. Functionally, promotes plant cell differentiation, organogenesis and somatic embryogenesis as well as cell proliferation. In Oryza sativa subsp. japonica (Rice), this protein is Phytosulfokines 1 (PSK1).